The following is a 237-amino-acid chain: Ubiquinone biosynthesis O-methyltransferase (237 aa).

Positions 38, 57, 78, and 122 each coordinate S-adenosyl-L-methionine.

Belongs to the methyltransferase superfamily. UbiG/COQ3 family.

The catalysed reaction is a 3-demethylubiquinol + S-adenosyl-L-methionine = a ubiquinol + S-adenosyl-L-homocysteine + H(+). The enzyme catalyses a 3-(all-trans-polyprenyl)benzene-1,2-diol + S-adenosyl-L-methionine = a 2-methoxy-6-(all-trans-polyprenyl)phenol + S-adenosyl-L-homocysteine + H(+). It participates in cofactor biosynthesis; ubiquinone biosynthesis. Functionally, O-methyltransferase that catalyzes the 2 O-methylation steps in the ubiquinone biosynthetic pathway. The polypeptide is Ubiquinone biosynthesis O-methyltransferase (Methylococcus capsulatus (strain ATCC 33009 / NCIMB 11132 / Bath)).